The primary structure comprises 900 residues: Exosome complex component 10 homolog (900 aa).

Disordered regions lie at residues 1–31 and 147–174; these read MPRT…SEDV and TSIE…TGTP. Positions 8–28 are enriched in basic and acidic residues; it reads VHQEAKEESAQADQPPKKSAS. Residues 273 to 438 enclose the 3'-5' exonuclease domain; it reads VVDTVEKLKQ…YVYGRMTNDL (166 aa). The Mg(2+) site is built by Asp-296, Glu-298, Asp-354, and Asp-423. Residues 485-565 form the HRDC domain; it reads DNRQLYALRG…LKARDQPLVK (81 aa). Residues 731-900 form a disordered region; sequence EQLKRKHPQA…FSNVRKEGKK (170 aa). A compositionally biased stretch (basic residues) spans 809–826; it reads RKQKKNQFQRGFKAKNRG. The span at 878 to 887 shows a compositional bias: low complexity; that stretch reads NNRNNKQFNK.

This sequence belongs to the exosome component 10/RRP6 family. As to quaternary structure, component of the RNA exosome complex. Interacts with spn-A/Rad51; the interaction is required for the recruitment of spn-A to the DNA-damage response foci. Interacts with Su(var)3-9, a heterochromatin factor; the interaction promotes association of Rrp6 with a subset of genomic loci. Interacts with Su(var)205, a heterochromatin factor. Interacts with HDAC1, a heterochromatin factor. Mg(2+) is required as a cofactor. As to expression, salivary gland (at protein level).

It is found in the nucleus. Its subcellular location is the chromosome. It localises to the cytoplasm. The protein resides in the cell cortex. The protein localises to the cytoskeleton. It is found in the microtubule organizing center. Its subcellular location is the centrosome. It localises to the spindle. The protein resides in the midbody. Its function is as follows. Catalytic component of the RNA exosome complex which has 3'-&gt;5' exoribonuclease activity and participates in a multitude of cellular RNA processing and degradation events. Degrades a large variety of non-coding RNAs that are processed by the exosome, such as pre-rRNAs and some small nucleolar RNAs (snoRNAs). Degrades transcripts derived from different types of heterochromatic repeats, such as subtelomeric minisatellites and simple gagaa repeats. Degrades transcripts derived from transposons and transposon fragments. Degrades chromatin-associated transcripts and contributes to the compaction of heterochromatin. Required for the efficient repair of DNA double-strand breaks via homologous recombination after irradiation. Required for cell proliferation and error-free mitosis. The polypeptide is Exosome complex component 10 homolog (Drosophila melanogaster (Fruit fly)).